We begin with the raw amino-acid sequence, 289 residues long: Phosphate import ATP-binding protein PstB (289 aa).

A disordered region spans residues 1–37; it reads MRSIDRPGGQAARPTIGSVAGASNTRTRDARSLPDTP. The ABC transporter domain occupies 41 to 284; the sequence is AAAENFSFYY…PVRRETEDYI (244 aa). Position 73-80 (73-80) interacts with ATP; it reads GPSGCGKS.

The protein belongs to the ABC transporter superfamily. Phosphate importer (TC 3.A.1.7) family. The complex is composed of two ATP-binding proteins (PstB), two transmembrane proteins (PstC and PstA) and a solute-binding protein (PstS).

Its subcellular location is the cell inner membrane. The catalysed reaction is phosphate(out) + ATP + H2O = ADP + 2 phosphate(in) + H(+). In terms of biological role, part of the ABC transporter complex PstSACB involved in phosphate import. Responsible for energy coupling to the transport system. The polypeptide is Phosphate import ATP-binding protein PstB (Aromatoleum aromaticum (strain DSM 19018 / LMG 30748 / EbN1) (Azoarcus sp. (strain EbN1))).